A 554-amino-acid chain; its full sequence is Glypican-1 (554 aa).

Residues 1-21 form the signal peptide; sequence MERLCWGWWWHLGILCLMHWA. Disulfide bonds link C32–C68, C62–C256, C69–C259, C191–C343, C246–C279, C268–C415, and C272–C401. N79 and N116 each carry an N-linked (GlcNAc...) asparagine glycan. Residues 346 to 369 form a disordered region; it reads PKKTNKGSKSEERRRKGKATQEDK. A compositionally biased stretch (basic and acidic residues) spans 353–369; that stretch reads SKSEERRRKGKATQEDK. S486, S488, and S490 each carry an O-linked (Xyl...) (heparan sulfate) serine glycan.

It belongs to the glypican family. In terms of processing, O-glycosylated with heparan sulfate side chains.

It is found in the cell membrane. Its subcellular location is the secreted. It localises to the extracellular space. Functionally, cell surface proteoglycan that bears heparan sulfate. This is Glypican-1 (gpc1) from Xenopus tropicalis (Western clawed frog).